Reading from the N-terminus, the 246-residue chain is Eukaryotic translation initiation factor 6 (246 aa).

Phosphoserine; by CK1 occurs at positions 174 and 175.

Belongs to the eIF-6 family. As to quaternary structure, monomer. Associates with the 60S ribosomal subunit. In terms of processing, phosphorylation at Ser-174 and Ser-175 promotes nuclear export.

The protein localises to the cytoplasm. The protein resides in the nucleus. It localises to the nucleolus. In terms of biological role, binds to the 60S ribosomal subunit and prevents its association with the 40S ribosomal subunit to form the 80S initiation complex in the cytoplasm. Is also involved in ribosome biogenesis. Associates with pre-60S subunits in the nucleus and is involved in its nuclear export. This Neurospora crassa (strain ATCC 24698 / 74-OR23-1A / CBS 708.71 / DSM 1257 / FGSC 987) protein is Eukaryotic translation initiation factor 6 (tif-6).